The primary structure comprises 448 residues: 26S proteasome regulatory subunit 4 homolog (448 aa).

Positions 1–16 (MGQGTPGGMGKQGGAP) are enriched in gly residues. Disordered regions lie at residues 1-56 (MGQG…AAAR) and 93-112 (LRPT…DLRG). Composition is skewed to basic and acidic residues over residues 17–33 (GDRK…RKFE) and 93–111 (LRPT…DDLR). Position 234–241 (234–241 (GEPGTGKT)) interacts with ATP.

Belongs to the AAA ATPase family.

The protein localises to the cytoplasm. The protein resides in the nucleus. In terms of biological role, the 26S proteasome is involved in the ATP-dependent degradation of ubiquitinated proteins. The regulatory (or ATPase) complex confers ATP dependency and substrate specificity to the 26S complex. In Oryza sativa subsp. japonica (Rice), this protein is 26S proteasome regulatory subunit 4 homolog (TBP2).